A 500-amino-acid chain; its full sequence is Nuclear distribution protein PAC1 (500 aa).

WD repeat units lie at residues 125–164 (HNGH…EPQQ), 169–219 (AHTR…NLKA), 225–265 (GHEN…IVLS), 268–310 (GHSN…LMIG), 338–378 (QNEL…IRSD), 397–436 (EHKS…ESNL), and 459–500 (IKDQ…EYIL).

The protein belongs to the WD repeat LIS1/nudF family. As to quaternary structure, self-associates. Interacts with NDL1 and dynein.

The protein localises to the cytoplasm. The protein resides in the cytoskeleton. Its subcellular location is the spindle pole. In terms of biological role, positively regulates the activity of the minus-end directed microtubule motor protein dynein. Plays a central role in positioning the mitotic spindle at the bud neck during cell division. Targets cytoplasmic dynein to microtubule plus ends, thereby promoting dynein-mediated microtubule sliding along the bud cortex and consequently the movement of the mitotic spindle to the bud neck. This Komagataella phaffii (strain GS115 / ATCC 20864) (Yeast) protein is Nuclear distribution protein PAC1.